The following is a 285-amino-acid chain: MTSYNFKTQTSFPLLLSISFFFLLLLNKVNSTGSLSFSFPKFAPNQPYLIFQRDALVTSTGVLQLTNVVNGVPSGKSLGRALYAAPFQIWDSTTGNVASFVTSFSFIIQAPNPTTTADGLAFFLAPVDTQPLDVGGMLGIFKDGYFNKSNQIVAVEFDTFSNIHFDPKGRHMGINVNSIVSIKTVPWNWTNGEVANVFISYEASTKSLTASLVYPSLETSFIVHAIVDVKDVLPEWVRFGFSATTGIDKGYVQTNDVLSWSFESNLPGGNSVASVKNAGLSTYAA.

An N-terminal signal peptide occupies residues methionine 1 to serine 31. The N-linked (GlcNAc...) asparagine glycan is linked to asparagine 147. Glutamate 156 and aspartate 158 together coordinate Mn(2+). Ca(2+) is bound by residues aspartate 158, phenylalanine 160, asparagine 162, and aspartate 166. Mn(2+)-binding residues include aspartate 166 and histidine 171. N-linked (GlcNAc...) asparagine glycosylation is present at asparagine 188.

The protein belongs to the leguminous lectin family. In terms of assembly, RPbAI is composed of two polypeptides, A and B, that associate into five different tetrameric isolectins. The A4 combination is the only one devoid of agglutination activity. Isoform B4 displays maximal agglutination activity. As to expression, strong expression in seed. Lower levels in the flower, and the bark of the roots. No expression in leaf. The lectin accumulates in the inner bark in autumn.

Functionally, N-acetyl-D-galactosamine specific lectin. Bark lectins are storage protein that probably maintains stocks of nitrogen during dormant period. Self-aggregatable molecules that can bind their own carbohydrate side chains. They could also play a role in the plant's defense against phytophagous invertebrates or herbivorous higher animals. This chain is Bark agglutinin I polypeptide A, found in Robinia pseudoacacia (Black locust).